Consider the following 810-residue polypeptide: LPS-assembly protein LptD (810 aa).

The first 29 residues, 1–29, serve as a signal peptide directing secretion; it reads MTKRTLGYSYPIALTISLVPALTPAIVQA.

It belongs to the LptD family. In terms of assembly, component of the lipopolysaccharide transport and assembly complex. Interacts with LptE and LptA.

The protein resides in the cell outer membrane. Together with LptE, is involved in the assembly of lipopolysaccharide (LPS) at the surface of the outer membrane. The polypeptide is LPS-assembly protein LptD (Aeromonas hydrophila subsp. hydrophila (strain ATCC 7966 / DSM 30187 / BCRC 13018 / CCUG 14551 / JCM 1027 / KCTC 2358 / NCIMB 9240 / NCTC 8049)).